A 453-amino-acid chain; its full sequence is tRNA-2-methylthio-N(6)-dimethylallyladenosine synthase (453 aa).

Positions Arg21 to Ala137 constitute an MTTase N-terminal domain. Residues Cys30, Cys66, Cys100, Cys174, Cys178, and Cys181 each coordinate [4Fe-4S] cluster. The region spanning Arg160–Glu389 is the Radical SAM core domain. In terms of domain architecture, TRAM spans Lys392 to Ile453.

The protein belongs to the methylthiotransferase family. MiaB subfamily. Monomer. Requires [4Fe-4S] cluster as cofactor.

The protein resides in the cytoplasm. The enzyme catalyses N(6)-dimethylallyladenosine(37) in tRNA + (sulfur carrier)-SH + AH2 + 2 S-adenosyl-L-methionine = 2-methylsulfanyl-N(6)-dimethylallyladenosine(37) in tRNA + (sulfur carrier)-H + 5'-deoxyadenosine + L-methionine + A + S-adenosyl-L-homocysteine + 2 H(+). Functionally, catalyzes the methylthiolation of N6-(dimethylallyl)adenosine (i(6)A), leading to the formation of 2-methylthio-N6-(dimethylallyl)adenosine (ms(2)i(6)A) at position 37 in tRNAs that read codons beginning with uridine. The chain is tRNA-2-methylthio-N(6)-dimethylallyladenosine synthase from Bdellovibrio bacteriovorus (strain ATCC 15356 / DSM 50701 / NCIMB 9529 / HD100).